The sequence spans 312 residues: Nucleosome assembly protein 1-like 4 (312 aa).

Residues 24-78 (VETLKNKLQALAEQHVDVLESLAPSVRKRVDVLMEIQSQHDELEVKFFEEKAALE) are a coiled coil. The short motif at 45 to 60 (LAPSVRKRVDVLMEIQ) is the Nuclear export signal element. A disordered region spans residues 288–312 (EDYGASWVDDEEEDDNDDEYSDEEA).

It belongs to the nucleosome assembly protein (NAP) family.

The protein resides in the nucleus. It is found in the cytoplasm. Its function is as follows. May modulate chromatin structure by regulation of nucleosome assembly/disassembly. This is Nucleosome assembly protein 1-like 4 from Oryza sativa subsp. indica (Rice).